The sequence spans 174 residues: UPF0316 protein LMHCC_0787 (174 aa).

The next 3 membrane-spanning stretches (helical) occupy residues 4–24, 36–56, and 62–82; these read GIFI…IYTV, LAAL…SLVL, and IANV…GMKI.

Belongs to the UPF0316 family.

The protein localises to the cell membrane. The chain is UPF0316 protein LMHCC_0787 from Listeria monocytogenes serotype 4a (strain HCC23).